Here is a 354-residue protein sequence, read N- to C-terminus: Type II restriction enzyme BanI (354 aa).

As to quaternary structure, homodimer.

The catalysed reaction is Endonucleolytic cleavage of DNA to give specific double-stranded fragments with terminal 5'-phosphates.. Its function is as follows. A P subtype restriction enzyme that recognizes the double-stranded sequence 5'-GGYRCC-3' and cleaves after G-1. This chain is Type II restriction enzyme BanI (banIR), found in Aneurinibacillus aneurinilyticus (Bacillus aneurinolyticus).